We begin with the raw amino-acid sequence, 328 residues long: MYNFKDSVNITVVSGNGGSGCVSFLREKFNAKGGPDGGNGGSGGSVIFKVRENLSTLSFYKNGHVLCAENGKPGMGFKRSGANGKDLTLFVPPNTEVYNENDGTLLYRLKNLNDEFVVLKGGRGGLGNWNFKTSVRRVPRFAQPGESGNSLSVRLELFLVADIGLVGLPNAGKSSLLNRITSAKSRVANYPFTTKIPHLGMLRRSYDDLIIADIPGIIKGASFGVGLGTKFLKHIAKTKILALVIDISEANFLESYNILLNELKSYSHKLFNKKKIIIANKLDLDGSEKNFDCLIKALGKEKVVGISIYENRGIDELIKEFFILAKTF.

Residues 2–160 (YNFKDSVNIT…LSVRLELFLV (159 aa)) enclose the Obg domain. The region spanning 161–326 (ADIGLVGLPN…LIKEFFILAK (166 aa)) is the OBG-type G domain. GTP-binding positions include 167–174 (GLPNAGKS), 192–196 (FTTKI), 213–216 (DIPG), 280–283 (NKLD), and 307–309 (SIY). Mg(2+)-binding residues include Ser-174 and Thr-194.

It belongs to the TRAFAC class OBG-HflX-like GTPase superfamily. OBG GTPase family. In terms of assembly, monomer. It depends on Mg(2+) as a cofactor.

It localises to the cytoplasm. Functionally, an essential GTPase which binds GTP, GDP and possibly (p)ppGpp with moderate affinity, with high nucleotide exchange rates and a fairly low GTP hydrolysis rate. Plays a role in control of the cell cycle, stress response, ribosome biogenesis and in those bacteria that undergo differentiation, in morphogenesis control. The chain is GTPase Obg from Borreliella burgdorferi (strain ATCC 35210 / DSM 4680 / CIP 102532 / B31) (Borrelia burgdorferi).